We begin with the raw amino-acid sequence, 395 residues long: Chalcone synthase (395 aa).

The active site involves Cys169.

This sequence belongs to the thiolase-like superfamily. Chalcone/stilbene synthases family.

It carries out the reaction (E)-4-coumaroyl-CoA + 3 malonyl-CoA + 3 H(+) = 2',4,4',6'-tetrahydroxychalcone + 3 CO2 + 4 CoA. Its pathway is secondary metabolite biosynthesis; flavonoid biosynthesis. In terms of biological role, the primary product of this enzyme is 4,2',4',6'-tetrahydroxychalcone (also termed naringenin-chalcone or chalcone) which can under specific conditions spontaneously isomerize into naringenin. This is Chalcone synthase (CHS) from Pinus strobus (Eastern white pine).